The primary structure comprises 470 residues: MDTSRVLLSAVFLISFLWDLPGFQQASISSSSSSAELGSAKGMRSRKEGRMPRAPRENATAREPLDRQEPPPRPQEEPQRRPPQQPEAREPPGRGPRVVPHEYMLSIYRTYSIAEKLGINASFFQSSKSANTITSFVDRGLDDLSHTPLRRQKYLFDVSTLSDKEELVGAELRLFRQAPAAPWGPPAGPLRLQLFACQSPLLLEARSLDPQGAPRPGWEVFDVWRGLRPQPWKQLCLELRAAWGGEPGAAEDEARAPGPQQPPPPDLRSLGFGRRVRTPQERALLVVFSRSQRKTLFAEMREQLGSATEVVGPGGGAEGSGPPPPPPPPPPSGTPDAGLWSPSPGRRRRRTAFASRHGKRHGKKSRLRCSKKPLHVNFKELGWDDWIIAPLEYEAYHCEGVCDFPLRSHLEPTNHAIIQTLMNSMDPGSTPPSCCVPTKLTPISILYIDAGNNVVYKQYEEMVVESCGCR.

A signal peptide spans 1–22 (MDTSRVLLSAVFLISFLWDLPG). Positions 23–350 (FQQASISSSS…SPSPGRRRRR (328 aa)) are excised as a propeptide. Positions 28–98 (ISSSSSSAEL…REPPGRGPRV (71 aa)) are disordered. Basic and acidic residues predominate over residues 45–80 (SRKEGRMPRAPRENATAREPLDRQEPPPRPQEEPQR). Asn120 carries an N-linked (GlcNAc...) asparagine glycan. Disordered regions lie at residues 247-272 (PGAAEDEARAPGPQQPPPPDLRSLGF) and 308-366 (TEVV…KKSR). Residues 321–333 (GPPPPPPPPPPSG) are compositionally biased toward pro residues. Basic residues predominate over residues 345 to 366 (GRRRRRTAFASRHGKRHGKKSR). 3 cysteine pairs are disulfide-bonded: Cys369–Cys435, Cys398–Cys467, and Cys402–Cys469.

Belongs to the TGF-beta family. Homodimer; disulfide-linked.

It localises to the secreted. Functionally, growth factor that controls proliferation and cellular differentiation in the retina and bone formation. Plays a key role in regulating apoptosis during retinal development. Establishes dorsal-ventral positional information in the retina and controls the formation of the retinotectal map. Required for normal formation of bones and joints in the limbs, skull, digits and axial skeleton. Plays a key role in establishing boundaries between skeletal elements during development. Regulation of GDF6 expression seems to be a mechanism for evolving species-specific changes in skeletal structures. Seems to positively regulate differentiation of chondrogenic tissue through the growth factor receptors subunits BMPR1A, BMPR1B, BMPR2 and ACVR2A, leading to the activation of SMAD1-SMAD5-SMAD8 complex. The regulation of chondrogenic differentiation is inhibited by NOG. Also involved in the induction of adipogenesis from mesenchymal stem cells. This mechanism acts through the growth factor receptors subunits BMPR1A, BMPR2 and ACVR2A and the activation of SMAD1-SMAD5-SMAD8 complex and MAPK14/p38. This chain is Growth/differentiation factor 6 (GDF6), found in Bos taurus (Bovine).